We begin with the raw amino-acid sequence, 102 residues long: uncharacterized protein (102 aa).

The interval 1–71 (MKRMIRSHGR…GSANETSACT (71 aa)) is disordered. Residues 1–79 (MKRMIRSHGR…CTRTDHQKAD (79 aa)) lie on the Extracellular side of the membrane. A compositionally biased stretch (polar residues) spans 56 to 71 (SSGTRRGSANETSACT). An N-linked (GlcNAc...) asparagine; by host glycan is attached at N65. Residues 80–97 (IGLWFMFLVFGLCSWLAM) traverse the membrane as a helical segment. The Cytoplasmic portion of the chain corresponds to 98–102 (RYRAQ).

It belongs to the HHV-5 UL15A protein family.

The protein localises to the host membrane. This is an uncharacterized protein from Human cytomegalovirus (strain AD169) (HHV-5).